We begin with the raw amino-acid sequence, 529 residues long: Phosphoenolpyruvate carboxykinase (ATP) (529 aa).

Position 52 (Arg52) interacts with substrate. The Ca(2+) site is built by Arg130, Asn131, and Phe133. Substrate is bound by residues Tyr191 and Lys197. Residues Lys197, His216, and Gly232–Thr240 each bind ATP. 2 residues coordinate Mn(2+): Lys197 and His216. Asp253 contributes to the Mn(2+) binding site. Gly267 lines the Ca(2+) pocket. Residues Glu281, Arg319, Arg438–Phe439, Phe439, and Thr444 contribute to the ATP site. Arg319 lines the substrate pocket.

It belongs to the phosphoenolpyruvate carboxykinase (ATP) family. As to quaternary structure, dimer of dimers. It depends on Mn(2+) as a cofactor.

Its subcellular location is the cytoplasm. It catalyses the reaction oxaloacetate + ATP = phosphoenolpyruvate + ADP + CO2. It participates in carbohydrate biosynthesis; gluconeogenesis. Allosterically activated by calcium. Functionally, involved in gluconeogenesis. Catalyzes the conversion of oxaloacetate (OAA) to phosphoenolpyruvate (PEP) through direct phosphoryl transfer between the nucleoside triphosphate and OAA. This Thermus thermophilus (strain ATCC 27634 / DSM 579 / HB8) protein is Phosphoenolpyruvate carboxykinase (ATP).